The following is a 160-amino-acid chain: Putative antiporter subunit mnhE2 (160 aa).

Transmembrane regions (helical) follow at residues 22–42, 55–75, and 100–120; these read HFKFSTFFSGYLIGLIVIYIL, IWVAIKFLGVYLYQLITSSIS, and SDWAITFLTILIIITPGSTVI.

Belongs to the CPA3 antiporters (TC 2.A.63) subunit E family. In terms of assembly, may form a heterooligomeric complex that consists of seven subunits: mnhA2, mnhB2, mnhC2, mnhD2, mnhE2, mnhF2 and mnhG2.

It localises to the cell membrane. The polypeptide is Putative antiporter subunit mnhE2 (mnhE2) (Staphylococcus aureus (strain Mu3 / ATCC 700698)).